The sequence spans 440 residues: Trigger factor (440 aa).

Residues 163–248 (GMVLTVDFSF…LKEIKKKELP (86 aa)) form the PPIase FKBP-type domain.

It belongs to the FKBP-type PPIase family. Tig subfamily.

The protein localises to the cytoplasm. It catalyses the reaction [protein]-peptidylproline (omega=180) = [protein]-peptidylproline (omega=0). Involved in protein export. Acts as a chaperone by maintaining the newly synthesized protein in an open conformation. Functions as a peptidyl-prolyl cis-trans isomerase. This is Trigger factor from Trichlorobacter lovleyi (strain ATCC BAA-1151 / DSM 17278 / SZ) (Geobacter lovleyi).